We begin with the raw amino-acid sequence, 257 residues long: Movement protein (257 aa).

Residues 212-257 (NQSKKGSNKYVGKRNDNKGLNKEGKLFDKVRIGQNSESSDAESSSF) form a disordered region. The span at 224–242 (KRNDNKGLNKEGKLFDKVR) shows a compositional bias: basic and acidic residues. Low complexity predominate over residues 247-257 (SESSDAESSSF).

Belongs to the tobamovirus movement protein family.

It is found in the host cytoplasm. The protein resides in the host cytoskeleton. Its subcellular location is the host cell junction. The protein localises to the host plasmodesma. In terms of biological role, transports viral genome to neighboring plant cells directly through plasmosdesmata, without any budding. The movement protein allows efficient cell to cell propagation, by bypassing the host cell wall barrier. Forms a ribonucleoprotein complex with viral RNA. Binds microtubules and modulates microtubule stability. Can bind double-stranded DNA. The protein is Movement protein (MP) of Pepper mild mottle virus (strain Spain) (PMMV-S).